The following is an 895-amino-acid chain: Serine/threonine-protein kinase-like protein ACR4 (895 aa).

The signal sequence occupies residues 1–29 (MRMFETRAREWILLVKLVLFTSIWQLASA). Residues 30-434 (LGSMSSIAIS…FWSLQLPIAT (405 aa)) lie on the Extracellular side of the membrane. Repeat copies occupy residues 38–73 (ISYGEGGSVFCGLKSDGSHLVVCYGSNSAILYGTPG), 77–112 (FIGLTGGDGFMCGLLMLSHQPYCWGNSAFIQMGVPQ), 130–167 (LCGLRKPIVGRRKNSNIISSSLVDCWGYNMTRNFVFDK), 169–202 (LHSLSAGSEFNCALSSKDKSVFCWGDENSSQVIS), 210–245 (FQKIAAGGYHVCGILDGLESRVLCWGKSLEFEEEVT), 262–296 (LLAVVGGKFYACGIKRYDHSAVCWGFFVNRSTPAP), and 301–339 (FYDLAAGNYFTCGVLTGTSMSPVCWGLGFPASIPLAVSP). The interval 38-339 (ISYGEGGSVF…PASIPLAVSP (302 aa)) is 7 X 36 AA repeats. Asn-158 and Asn-196 each carry an N-linked (GlcNAc...) asparagine glycan. Asn-290 carries N-linked (GlcNAc...) asparagine glycosylation. The TNFR-Cys repeat unit spans residues 346–395 (PCPPGTHELSNQENSPCKFTGSHICLPCSTSCPPGMYQKSVCTERSDQVC). Disulfide bonds link Cys-347–Cys-370, Cys-373–Cys-387, and Cys-377–Cys-395. Asn-398 and Asn-410 each carry an N-linked (GlcNAc...) asparagine glycan. Residues 435–455 (AEIGFALFLVAVVSITAALYI) traverse the membrane as a helical segment. Residues 456 to 895 (RYRLRNCRCS…GQSLFLHHNF (440 aa)) are Cytoplasmic-facing. Ser-475 bears the Phosphoserine mark. The region spanning 512 to 789 (FKEESIVGKG…KVTTALERAL (278 aa)) is the Protein kinase domain. ATP is bound by residues 518–526 (VGKGSFSCV) and Lys-540. The active-site Proton acceptor is Asp-641. The interval 818-895 (SWRIGSKRSG…GQSLFLHHNF (78 aa)) is disordered. Over residues 865-877 (EGRKQQEALRSLE) the composition is skewed to basic and acidic residues.

This sequence belongs to the protein kinase superfamily. Ser/Thr protein kinase family. In terms of assembly, homodimer. Interacts with PP2A3. Post-translationally, autophosphorylated and phosphorylated by ALE2. In terms of tissue distribution, expressed in seedlings, floral buds, siliques, leaves, shoot apical meristems (SAM), and, to a lower extent, in roots.

It localises to the cell membrane. It is found in the endosome. The protein localises to the multivesicular body membrane. The catalysed reaction is L-seryl-[protein] + ATP = O-phospho-L-seryl-[protein] + ADP + H(+). It carries out the reaction L-threonyl-[protein] + ATP = O-phospho-L-threonyl-[protein] + ADP + H(+). In terms of biological role, controls formative cell division in meristems, including root tips and lateral root initiation zones of the pericycle, in response to CLE40 signal. Acts with CLE40p peptide as a ligand-receptor pair in a signal transduction pathway, coordinating movement of the root tip and organization of cell divisions in the root meristem. Required during embryogenesis and development, probably for the differentiation of protoderm and epidermal cells. Involved in the regulation of cellular organization during the development of sepal margins and ovule integument outgrowth and promotes giant cell formation. Can phosphorylate ALE2. The chain is Serine/threonine-protein kinase-like protein ACR4 from Arabidopsis thaliana (Mouse-ear cress).